The sequence spans 290 residues: Probable protein phosphatase 2C 62 (290 aa).

The 251-residue stretch at 38–288 folds into the PPM-type phosphatase domain; sequence KHGYHLVKGK…DDISCIVVKF (251 aa). The Mn(2+) site is built by Asp-75, Gly-76, Asp-240, and Asp-279.

This sequence belongs to the PP2C family. Mg(2+) is required as a cofactor. It depends on Mn(2+) as a cofactor.

The enzyme catalyses O-phospho-L-seryl-[protein] + H2O = L-seryl-[protein] + phosphate. The catalysed reaction is O-phospho-L-threonyl-[protein] + H2O = L-threonyl-[protein] + phosphate. The sequence is that of Probable protein phosphatase 2C 62 from Oryza sativa subsp. japonica (Rice).